A 279-amino-acid chain; its full sequence is NAD kinase (279 aa).

Residue D57 is the Proton acceptor of the active site. Residues D57–G58, N133–E134, R159, D161, and T172–S177 each bind NAD(+).

The protein belongs to the NAD kinase family. It depends on a divalent metal cation as a cofactor.

Its subcellular location is the cytoplasm. It catalyses the reaction NAD(+) + ATP = ADP + NADP(+) + H(+). In terms of biological role, involved in the regulation of the intracellular balance of NAD and NADP, and is a key enzyme in the biosynthesis of NADP. Catalyzes specifically the phosphorylation on 2'-hydroxyl of the adenosine moiety of NAD to yield NADP. The polypeptide is NAD kinase (Streptococcus pyogenes serotype M2 (strain MGAS10270)).